The chain runs to 154 residues: Cytochrome c oxidase subunit 5A, mitochondrial (154 aa).

Residues 1–45 constitute a mitochondrion transit peptide; it reads MLAAALRRCXASVRVLLPKPGAAAPSSWSSSAFRATAAIQSVRCY. Positions 2–21 match the SIFI-degron motif; sequence LAAALRRCXASVRVLLPKPG. Residues lysine 91 and lysine 117 each carry the N6-acetyllysine modification. Residue threonine 145 is modified to Phosphothreonine.

The protein belongs to the cytochrome c oxidase subunit 5A family. As to quaternary structure, component of the cytochrome c oxidase (complex IV, CIV), a multisubunit enzyme composed of 14 subunits. The complex is composed of a catalytic core of 3 subunits MT-CO1, MT-CO2 and MT-CO3, encoded in the mitochondrial DNA, and 11 supernumerary subunits COX4I, COX5A, COX5B, COX6A, COX6B, COX6C, COX7A, COX7B, COX7C, COX8 and NDUFA4, which are encoded in the nuclear genome. The complex exists as a monomer or a dimer and forms supercomplexes (SCs) in the inner mitochondrial membrane with NADH-ubiquinone oxidoreductase (complex I, CI) and ubiquinol-cytochrome c oxidoreductase (cytochrome b-c1 complex, complex III, CIII), resulting in different assemblies (supercomplex SCI(1)III(2)IV(1) and megacomplex MCI(2)III(2)IV(2)). Interacts with AFG1L. Interacts with RAB5IF. Post-translationally, in response to mitochondrial stress, the precursor protein is ubiquitinated by the SIFI complex in the cytoplasm before mitochondrial import, leading to its degradation. Within the SIFI complex, UBR4 initiates ubiquitin chain that are further elongated or branched by KCMF1.

It localises to the mitochondrion inner membrane. Its pathway is energy metabolism; oxidative phosphorylation. Component of the cytochrome c oxidase, the last enzyme in the mitochondrial electron transport chain which drives oxidative phosphorylation. The respiratory chain contains 3 multisubunit complexes succinate dehydrogenase (complex II, CII), ubiquinol-cytochrome c oxidoreductase (cytochrome b-c1 complex, complex III, CIII) and cytochrome c oxidase (complex IV, CIV), that cooperate to transfer electrons derived from NADH and succinate to molecular oxygen, creating an electrochemical gradient over the inner membrane that drives transmembrane transport and the ATP synthase. Cytochrome c oxidase is the component of the respiratory chain that catalyzes the reduction of oxygen to water. Electrons originating from reduced cytochrome c in the intermembrane space (IMS) are transferred via the dinuclear copper A center (CU(A)) of subunit 2 and heme A of subunit 1 to the active site in subunit 1, a binuclear center (BNC) formed by heme A3 and copper B (CU(B)). The BNC reduces molecular oxygen to 2 water molecules using 4 electrons from cytochrome c in the IMS and 4 protons from the mitochondrial matrix. The sequence is that of Cytochrome c oxidase subunit 5A, mitochondrial (COX5A) from Notamacropus parma (Parma wallaby).